The chain runs to 715 residues: Lactococcin transport/processing ATP-binding protein LcnC-like (715 aa).

Residues 11 to 138 form the Peptidase C39 domain; that stretch reads QVDEMDCGCA…SEWTGISLFL (128 aa). Cys-17 is an active-site residue. 5 helical membrane passes run 167–187, 197–217, 237–257, 282–302, and 307–327; these read VILN…LGSY, IPNA…LTYI, LAID…MSFF, TILS…ILGL, and LFLL…IFTP. The 283-residue stretch at 168–450 folds into the ABC transmembrane type-1 domain; that stretch reads ILNIVIASFI…IINLQTKLQK (283 aa). Positions 482–715 constitute an ABC transporter domain; it reads LNMSEISYQY…NGFYAQLYHN (234 aa). 515–522 contributes to the ATP binding site; the sequence is GISGSGKS.

The protein belongs to the ABC transporter superfamily. HlyB family.

It is found in the cell membrane. Functionally, involved in the export process of a bacteriocin lactococcin. This Lactococcus lactis subsp. lactis (strain IL1403) (Streptococcus lactis) protein is Lactococcin transport/processing ATP-binding protein LcnC-like (lcnC).